Consider the following 309-residue polypeptide: MILTVTMNPSIDISYPLDELKIDTVNRVVDVTKTAGGKGLNVTRVLSEFGDSVLATGLVGGKLGEFLVEHIDNQVKKDFFSIQGETRNCIAILHGDNQTEVLEKGPEVLEQEGQDFLEHFKKLLESVEVVAISGSLPTGLPVDYYASLVELANQAGKPVVLDCSGAALQAVLESPHKPTVIKPNNEELSQLLGREVSEDLDELKEVLQEPLFAGIEWIIVSLGANGTFAKHGDTFYKVDIPRIQVVNPVGSGDSTVAGISSGLLHKESDAELLIKANVLGMLNAQEKMTGHVNMANYQALYDQLIVKEV.

It belongs to the carbohydrate kinase PfkB family. LacC subfamily.

It carries out the reaction D-tagatofuranose 6-phosphate + ATP = D-tagatofuranose 1,6-bisphosphate + ADP + H(+). It functions in the pathway carbohydrate metabolism; D-tagatose 6-phosphate degradation; D-glyceraldehyde 3-phosphate and glycerone phosphate from D-tagatose 6-phosphate: step 1/2. The protein is Tagatose-6-phosphate kinase of Streptococcus pneumoniae (strain 70585).